Here is a 331-residue protein sequence, read N- to C-terminus: N-arachidonyl glycine receptor (331 aa).

Residues 1-26 (MATLSNHNQLDLSNGSHPEEYKIAAL) are Extracellular-facing. N-linked (GlcNAc...) asparagine glycosylation is present at N14. Residues 27–47 (VFYSCIFLIGLFVNVTALWVF) traverse the membrane as a helical segment. The Cytoplasmic segment spans residues 48–56 (SCTTKKRTT). A helical transmembrane segment spans residues 57 to 77 (VTIYMMNVALLDLVFILSLPF). The Extracellular portion of the chain corresponds to 78–95 (RMFYYAKGEWPFGEYFCH). Cysteines 94 and 172 form a disulfide. A helical membrane pass occupies residues 96 to 116 (ILGALVVFYPSLALWLLAFIS). Over 117-138 (ADRYMAIVQPKYAKELKNTGKA) the chain is Cytoplasmic. The chain crosses the membrane as a helical span at residues 139–159 (VLACGGVWVMTLTTTVPLLLL). The Extracellular segment spans residues 160–191 (YEDPDKASSPATCLKISDITHLKAVNVLNFTR). The N-linked (GlcNAc...) asparagine glycan is linked to N188. The chain crosses the membrane as a helical span at residues 192 to 212 (LIFFFLIPLFIMIGCYVVIIH). Topologically, residues 213-236 (SLLRGQTSKLKPKVKEKSIRIIMT) are cytoplasmic. A helical membrane pass occupies residues 237 to 257 (LLLQVLVCFVPFHICFAVLML). Residues 258-268 (QGQENSYSPWG) are Extracellular-facing. The chain crosses the membrane as a helical span at residues 269 to 289 (AFTTFLMNLSTCLDVVLYYIV). Topologically, residues 290-331 (SKQFQARVISVMLYRNYLRSVRRKSVRSGSLRSLSNMNSEML) are cytoplasmic. S322 is modified (phosphoserine).

This sequence belongs to the G-protein coupled receptor 1 family. As to expression, expressed in the eye including cornea, retina, iris and ciliary epithelium (at protein level). Expressed in spleen, liver and lymphocytes with highest expression levels in intestinal intraepithelial lymphocytes.

Its subcellular location is the cell membrane. The protein resides in the cytoplasmic vesicle membrane. Functionally, g protein-coupled receptor (GPCR) that plays a role in diverse physiological processes particularly within the immune and nervous systems. Becomes active when triggered by various endogenous ligands including endocannabinoid N-arachidonyl glycine (NAGly), delta-9-tetrahydrocannabinol or resolvin D2/RvD2 derived from the omega-3 fatty acid docosahexaenoic acid (DHA). Upon RvD2 binding, facilitates the resolution of inflammation, aiding in tissue repair and homeostasis. Mechanistically, RvD2 ligation initiates Galphas protein coupling, activation of cAMP-PKA signaling pathway and phosphorylation of STAT3, leading to RvD2-stimulated macrophage phagocytosis. Mediates NAGly-induced process of reorganization of actin filaments and induction of acrosomal exocytosis. Activation by N-arachidonoyl glycine (NAGly) can also induce apoptosis in macrophages. Plays a role in homeostasis of CD8+ subsets of intraepithelial lymphocytes (IELs) (CD8alphaalpha and CD8alphabeta IELs) in small intestine by supporting preferential migration of CD8alphaalpha T-cells to intraepithelial compartment over lamina propria compartment, and by mediating their reconstitution into small intestine after bone marrow transplant. Also participates in hypotensive responses, mediating reduction in intraocular and blood pressure. The polypeptide is N-arachidonyl glycine receptor (Mus musculus (Mouse)).